A 382-amino-acid polypeptide reads, in one-letter code: Sialidase (382 aa).

Residue Arg37 participates in substrate binding. Cys42 and Cys103 are oxidised to a cystine. Asp62 serves as the catalytic Proton acceptor. BNR repeat units lie at residues 71–82 (ARSTDGGKTWNK), 145–156 (YKSTDDGVTFSK), and 210–220 (IYSTDGITWSL). Residue Arg246 coordinates substrate. One copy of the BNR 4 repeat lies at 254–265 (FETKDFGKTWTE). Substrate is bound at residue Arg309. Tyr342 (nucleophile) is an active-site residue. Glu361 is a catalytic residue.

The protein belongs to the glycosyl hydrolase 33 family. Monomer.

The enzyme catalyses Hydrolysis of alpha-(2-&gt;3)-, alpha-(2-&gt;6)-, alpha-(2-&gt;8)- glycosidic linkages of terminal sialic acid residues in oligosaccharides, glycoproteins, glycolipids, colominic acid and synthetic substrates.. Its function is as follows. Cleaves the terminal sialic acid (N-acetyl neuraminic acid) from carbohydrate chains in glycoproteins providing free sialic acid which can be used as carbon and energy sources. Sialidases have been suggested to be pathogenic factors in microbial infections. This Salmonella typhimurium (strain LT2 / SGSC1412 / ATCC 700720) protein is Sialidase (nanH).